Reading from the N-terminus, the 214-residue chain is MIEPLHTAPPLLAAHALAFSRNEEPVFGPLDFHVDAGEALLVQGDNGAGKTTLLRVLAGLLHVEHGQIQIDGKTAKRGDRSRFMAYLGHLPGLKADLSTLENLHFLCGLHGRRAKQMPGSALAIVGLAGYEDALVRQLSAGQRKRLALARLWLSPAPLWLLDEPYANLDLDGITLVNRMISAHLRGGGAALVTTHGAYAAPPVRTRMLTLEAAA.

Residues 12-214 form the ABC transporter domain; sequence LAAHALAFSR…TRMLTLEAAA (203 aa). 44–51 contributes to the ATP binding site; it reads GDNGAGKT.

Belongs to the ABC transporter superfamily. CcmA exporter (TC 3.A.1.107) family. As to quaternary structure, the complex is composed of two ATP-binding proteins (CcmA) and two transmembrane proteins (CcmB).

Its subcellular location is the cell inner membrane. It catalyses the reaction heme b(in) + ATP + H2O = heme b(out) + ADP + phosphate + H(+). Its function is as follows. Part of the ABC transporter complex CcmAB involved in the biogenesis of c-type cytochromes; once thought to export heme, this seems not to be the case, but its exact role is uncertain. Responsible for energy coupling to the transport system. This is Cytochrome c biogenesis ATP-binding export protein CcmA from Xanthomonas oryzae pv. oryzae (strain MAFF 311018).